The chain runs to 289 residues: Cyclin-dependent kinase inhibitor 4 (289 aa).

Disordered stretches follow at residues M1–I31, L56–S160, and S227–E248. A compositionally biased stretch (gly residues) spans A13–E28. Residues L56–S80 are compositionally biased toward low complexity. Positions C134 to L144 are enriched in polar residues.

This sequence belongs to the CDI family. ICK/KRP subfamily. Specifically interacts with CDKA-1, but not with CDKB1-1. Interacts with CYCD4-1. Binds to FBL17. In terms of tissue distribution, expressed in leaves and flowers and at lower levels in roots.

Its subcellular location is the nucleus. It is found in the nucleoplasm. Its function is as follows. Binds and inhibits CYCD2-1/CDKA-1 complex kinase activity. May target specifically CDKA-1. The protein is Cyclin-dependent kinase inhibitor 4 (KRP4) of Arabidopsis thaliana (Mouse-ear cress).